A 348-amino-acid chain; its full sequence is Probable dual-specificity RNA methyltransferase RlmN (348 aa).

Glutamate 93 functions as the Proton acceptor in the catalytic mechanism. Positions 99-333 (TEKRLTACLS…VSFRKSRGLD (235 aa)) constitute a Radical SAM core domain. Cysteines 106 and 338 form a disulfide. [4Fe-4S] cluster is bound by residues cysteine 113, cysteine 117, and cysteine 120. Residues 160 to 161 (GE), serine 190, 219 to 221 (SLH), and asparagine 295 each bind S-adenosyl-L-methionine. Cysteine 338 (S-methylcysteine intermediate) is an active-site residue.

This sequence belongs to the radical SAM superfamily. RlmN family. [4Fe-4S] cluster is required as a cofactor.

It localises to the cytoplasm. The catalysed reaction is adenosine(2503) in 23S rRNA + 2 reduced [2Fe-2S]-[ferredoxin] + 2 S-adenosyl-L-methionine = 2-methyladenosine(2503) in 23S rRNA + 5'-deoxyadenosine + L-methionine + 2 oxidized [2Fe-2S]-[ferredoxin] + S-adenosyl-L-homocysteine. It catalyses the reaction adenosine(37) in tRNA + 2 reduced [2Fe-2S]-[ferredoxin] + 2 S-adenosyl-L-methionine = 2-methyladenosine(37) in tRNA + 5'-deoxyadenosine + L-methionine + 2 oxidized [2Fe-2S]-[ferredoxin] + S-adenosyl-L-homocysteine. Specifically methylates position 2 of adenine 2503 in 23S rRNA and position 2 of adenine 37 in tRNAs. In Prochlorococcus marinus (strain MIT 9312), this protein is Probable dual-specificity RNA methyltransferase RlmN.